The sequence spans 1043 residues: Constitutive coactivator of PPAR-gamma-like protein 1 homolog (1043 aa).

2 disordered regions span residues Ser353–Ile497 and Tyr929–Glu1043. Composition is skewed to polar residues over residues Gln362 to Pro375 and Ser405 to Asp419. 2 stretches are compositionally biased toward basic and acidic residues: residues Thr451 to Lys471 and Glu951 to Lys964. Positions Val801 to Glu1043 are RNA binding. The segment covering Glu995 to Ser1010 has biased composition (low complexity).

Belongs to the constitutive coactivator of PPAR-gamma family.

The protein resides in the cytoplasm. It is found in the cell membrane. May bee involved in the oxidative stress-induced survival signaling. Binds RNA. May participate in mRNA transport in the cytoplasm. This chain is Constitutive coactivator of PPAR-gamma-like protein 1 homolog (fam120a), found in Xenopus tropicalis (Western clawed frog).